A 464-amino-acid chain; its full sequence is ATP synthase subunit beta (464 aa).

Residue Gly-154 to Thr-161 coordinates ATP.

This sequence belongs to the ATPase alpha/beta chains family. F-type ATPases have 2 components, CF(1) - the catalytic core - and CF(0) - the membrane proton channel. CF(1) has five subunits: alpha(3), beta(3), gamma(1), delta(1), epsilon(1). CF(0) has three main subunits: a(1), b(2) and c(9-12). The alpha and beta chains form an alternating ring which encloses part of the gamma chain. CF(1) is attached to CF(0) by a central stalk formed by the gamma and epsilon chains, while a peripheral stalk is formed by the delta and b chains.

The protein localises to the cell inner membrane. The enzyme catalyses ATP + H2O + 4 H(+)(in) = ADP + phosphate + 5 H(+)(out). Functionally, produces ATP from ADP in the presence of a proton gradient across the membrane. The catalytic sites are hosted primarily by the beta subunits. This Blochmanniella floridana protein is ATP synthase subunit beta.